A 337-amino-acid polypeptide reads, in one-letter code: Gastrula zinc finger protein XlCGF26.1 (337 aa).

C2H2-type zinc fingers lie at residues 6–28 (FDCT…YKIH), 34–56 (FICA…SKIH), 62–84 (FPCT…NKIH), 90–112 (FICA…SKIH), 118–140 (FPCT…NKIH), 146–168 (FICA…SKIH), 174–196 (FPCT…NKIH), 202–224 (FTCT…VKIH), 230–252 (FTCT…NKIH), 258–280 (FTCT…FKIH), 286–309 (FSCT…KRTH), and 315–337 (FTCT…NKIH).

The protein belongs to the krueppel C2H2-type zinc-finger protein family.

The protein localises to the nucleus. May be involved in transcriptional regulation. The polypeptide is Gastrula zinc finger protein XlCGF26.1 (Xenopus laevis (African clawed frog)).